The sequence spans 420 residues: tRNA(Ile)-lysidine synthase (420 aa).

Position 28 to 33 (28 to 33) interacts with ATP; it reads SGGLDS.

Belongs to the tRNA(Ile)-lysidine synthase family.

Its subcellular location is the cytoplasm. The enzyme catalyses cytidine(34) in tRNA(Ile2) + L-lysine + ATP = lysidine(34) in tRNA(Ile2) + AMP + diphosphate + H(+). Ligates lysine onto the cytidine present at position 34 of the AUA codon-specific tRNA(Ile) that contains the anticodon CAU, in an ATP-dependent manner. Cytidine is converted to lysidine, thus changing the amino acid specificity of the tRNA from methionine to isoleucine. The chain is tRNA(Ile)-lysidine synthase from Hydrogenovibrio crunogenus (strain DSM 25203 / XCL-2) (Thiomicrospira crunogena).